The primary structure comprises 345 residues: Beta-hexosaminidase (345 aa).

Substrate is bound by residues Asp-60, Arg-68, Arg-132, and 162-163 (KH). Residue His-175 is the Proton donor/acceptor of the active site. Residue Asp-247 is the Nucleophile of the active site.

Belongs to the glycosyl hydrolase 3 family. NagZ subfamily.

The protein localises to the cytoplasm. It catalyses the reaction Hydrolysis of terminal non-reducing N-acetyl-D-hexosamine residues in N-acetyl-beta-D-hexosaminides.. The protein operates within cell wall biogenesis; peptidoglycan recycling. In terms of biological role, plays a role in peptidoglycan recycling by cleaving the terminal beta-1,4-linked N-acetylglucosamine (GlcNAc) from peptide-linked peptidoglycan fragments, giving rise to free GlcNAc, anhydro-N-acetylmuramic acid and anhydro-N-acetylmuramic acid-linked peptides. This is Beta-hexosaminidase from Actinobacillus pleuropneumoniae serotype 5b (strain L20).